The following is a 273-amino-acid chain: Octanoyl-[GcvH]:protein N-octanoyltransferase (273 aa).

One can recognise a BPL/LPL catalytic domain in the interval 40–245 (ATEGAAIRSW…SLMELGATLT (206 aa)). Cys144 (acyl-thioester intermediate) is an active-site residue.

The protein belongs to the octanoyltransferase LipL family.

The enzyme catalyses N(6)-octanoyl-L-lysyl-[glycine-cleavage complex H protein] + L-lysyl-[lipoyl-carrier protein] = N(6)-octanoyl-L-lysyl-[lipoyl-carrier protein] + L-lysyl-[glycine-cleavage complex H protein]. Its pathway is protein modification; protein lipoylation via endogenous pathway; protein N(6)-(lipoyl)lysine from octanoyl-[acyl-carrier-protein]. Its function is as follows. Catalyzes the amidotransfer (transamidation) of the octanoyl moiety from octanoyl-GcvH to the lipoyl domain of the E2 subunit of lipoate-dependent enzymes. The protein is Octanoyl-[GcvH]:protein N-octanoyltransferase of Exiguobacterium sibiricum (strain DSM 17290 / CCUG 55495 / CIP 109462 / JCM 13490 / 255-15).